Consider the following 244-residue polypeptide: Probable 2-phosphosulfolactate phosphatase (244 aa).

It belongs to the ComB family. Mg(2+) is required as a cofactor.

The catalysed reaction is (2R)-O-phospho-3-sulfolactate + H2O = (2R)-3-sulfolactate + phosphate. In Thermosynechococcus vestitus (strain NIES-2133 / IAM M-273 / BP-1), this protein is Probable 2-phosphosulfolactate phosphatase.